The primary structure comprises 421 residues: Autophagy-related protein 17 (421 aa).

The protein belongs to the ATG17 family. Forms a complex with ATG13, ATG29 and CIS1/ATG31. The ATG17-ATG29-ATG31 complex interacts with the ATG1-ATG13 complex. Forms a complex with SNX4 and ATG20. Interacts with ATG11.

The protein resides in the cytoplasm. Its subcellular location is the preautophagosomal structure membrane. In terms of biological role, autophagy-specific protein that functions with ATG13, ATG29, and CIS1/ATG31 in response to autophagy-inducing signals as a scaffold to recruit other ATG proteins to organize pre-autophagosomal structure (PAS) formation. Modulates the timing and magnitude of the autophagy response, such as the size of the sequestering vesicles, through interacting with and regulating ATG1 kinase activity. Plays particularly a role in pexophagy and nucleophagy. With ATG13, is required for ATG1 activation by autophosphorylation. Recruits ATG9 to the pre-autophagosomal structure. The chain is Autophagy-related protein 17 from Kluyveromyces marxianus (strain DMKU3-1042 / BCC 29191 / NBRC 104275) (Yeast).